The chain runs to 147 residues: Endoribonuclease YbeY (147 aa).

Zn(2+) contacts are provided by His-109, His-113, and His-119.

Belongs to the endoribonuclease YbeY family. Zn(2+) is required as a cofactor.

Its subcellular location is the cytoplasm. Single strand-specific metallo-endoribonuclease involved in late-stage 70S ribosome quality control and in maturation of the 3' terminus of the 16S rRNA. The chain is Endoribonuclease YbeY from Thiobacillus denitrificans (strain ATCC 25259 / T1).